A 167-amino-acid chain; its full sequence is Small ribosomal subunit protein uS5 (167 aa).

One can recognise an S5 DRBM domain in the interval 12–75; the sequence is LQEKLVQVNR…DAARKNMITV (64 aa).

This sequence belongs to the universal ribosomal protein uS5 family. Part of the 30S ribosomal subunit. Contacts proteins S4 and S8.

With S4 and S12 plays an important role in translational accuracy. In terms of biological role, located at the back of the 30S subunit body where it stabilizes the conformation of the head with respect to the body. The protein is Small ribosomal subunit protein uS5 of Hahella chejuensis (strain KCTC 2396).